Here is a 43-residue protein sequence, read N- to C-terminus: Protein PsbN (43 aa).

A helical transmembrane segment spans residues 5–25; sequence LILSIFIFSLLLGITSYSIYI.

Belongs to the PsbN family.

Its subcellular location is the plastid. It is found in the chloroplast thylakoid membrane. Its function is as follows. May play a role in photosystem I and II biogenesis. This is Protein PsbN from Cyanidium caldarium (Red alga).